The chain runs to 208 residues: Frataxin, mitochondrial (208 aa).

Residues 1–40 (MWTFGRRAAAGLLPRTASRASAWVRNPRGRERIGTCGRRG) constitute a mitochondrion transit peptide.

This sequence belongs to the frataxin family. In terms of assembly, component of the mitochondrial core iron-sulfur cluster (ISC) complex composed of NFS1, LYRM4, NDUFAB1, ISCU, FXN, and FDX2; this complex is a heterohexamer containing two copies of each monomer. Homodimer. Monomer (probable predominant form). Oligomer. Monomers and polymeric aggregates of &gt;1 MDa have been isolated from mitochondria. A small fraction of heterologous overexpressed recombinant frataxin forms high-molecular weight aggregates that incorporate iron. Interacts with LYRM4. Interacts (via ferrous form) with ISCU; the interaction is possible when both are bound to the dimeric form of the cysteine desulfurase complex (NFS1:LYRM4) and the interaction enhances FXN interaction to the dimeric form of the cysteine desulfurase complex (NFS1:LYRM4). Interacts with FECH; one iron-bound FXN monomer seems to interact with a FECH homodimer. Interacts with SDHA and SDHB. Interacts with ACO2; the interaction is dependent on citrate. Interacts with HSPA9. As to quaternary structure, interacts with ACO1. Interacts with ISCU (cytoplasmic form). In terms of processing, processed in two steps by mitochondrial processing peptidase (MPP). MPP first cleaves the precursor to intermediate form and subsequently converts the intermediate to yield frataxin mature form (frataxin(81-210)) which is the predominant form. The additional forms, frataxin(56-210) and frataxin(78-210), seem to be produced when the normal maturation process is impaired; their physiological relevance is unsure.

Its subcellular location is the mitochondrion. The protein localises to the cytoplasm. It is found in the cytosol. It carries out the reaction 4 Fe(2+) + O2 + 4 H(+) = 4 Fe(3+) + 2 H2O. Its function is as follows. Functions as an activator of persulfide transfer to the scaffoding protein ISCU as component of the core iron-sulfur cluster (ISC) assembly complex and participates to the [2Fe-2S] cluster assembly. Accelerates sulfur transfer from NFS1 persulfide intermediate to ISCU and to small thiols such as L-cysteine and glutathione leading to persulfuration of these thiols and ultimately sulfide release. Binds ferrous ion and is released from FXN upon the addition of both L-cysteine and reduced FDX2 during [2Fe-2S] cluster assembly. The core iron-sulfur cluster (ISC) assembly complex is involved in the de novo synthesis of a [2Fe-2S] cluster, the first step of the mitochondrial iron-sulfur protein biogenesis. This process is initiated by the cysteine desulfurase complex (NFS1:LYRM4:NDUFAB1) that produces persulfide which is delivered on the scaffold protein ISCU in a FXN-dependent manner. Then this complex is stabilized by FDX2 which provides reducing equivalents to accomplish the [2Fe-2S] cluster assembly. Finally, the [2Fe-2S] cluster is transferred from ISCU to chaperone proteins, including HSCB, HSPA9 and GLRX5. May play a role in the protection against iron-catalyzed oxidative stress through its ability to catalyze the oxidation of Fe(2+) to Fe(3+); the oligomeric form but not the monomeric form has in vitro ferroxidase activity. May be able to store large amounts of iron in the form of a ferrihydrite mineral by oligomerization; however, the physiological relevance is unsure as reports are conflicting and the function has only been shown using heterologous overexpression systems. May function as an iron chaperone protein that protects the aconitase [4Fe-4S]2+ cluster from disassembly and promotes enzyme reactivation. May play a role as a high affinity iron binding partner for FECH that is capable of both delivering iron to ferrochelatase and mediating the terminal step in mitochondrial heme biosynthesis. Modulates the RNA-binding activity of ACO1. May be involved in the cytoplasmic iron-sulfur protein biogenesis. May contribute to oxidative stress resistance and overall cell survival. This Rattus norvegicus (Rat) protein is Frataxin, mitochondrial.